The sequence spans 427 residues: 3-phosphoshikimate 1-carboxyvinyltransferase (427 aa).

The 3-phosphoshikimate site is built by Lys22, Ser23, and Arg27. A phosphoenolpyruvate-binding site is contributed by Lys22. Phosphoenolpyruvate contacts are provided by Gly96 and Arg124. The 3-phosphoshikimate site is built by Ser170, Ser171, Gln172, Ser198, Asp314, Asn337, and Lys341. Residue Gln172 participates in phosphoenolpyruvate binding. Asp314 functions as the Proton acceptor in the catalytic mechanism. Phosphoenolpyruvate-binding residues include Arg345, Arg387, and Lys412.

This sequence belongs to the EPSP synthase family. As to quaternary structure, monomer.

It localises to the cytoplasm. The catalysed reaction is 3-phosphoshikimate + phosphoenolpyruvate = 5-O-(1-carboxyvinyl)-3-phosphoshikimate + phosphate. The protein operates within metabolic intermediate biosynthesis; chorismate biosynthesis; chorismate from D-erythrose 4-phosphate and phosphoenolpyruvate: step 6/7. In terms of biological role, catalyzes the transfer of the enolpyruvyl moiety of phosphoenolpyruvate (PEP) to the 5-hydroxyl of shikimate-3-phosphate (S3P) to produce enolpyruvyl shikimate-3-phosphate and inorganic phosphate. The protein is 3-phosphoshikimate 1-carboxyvinyltransferase of Tolumonas auensis (strain DSM 9187 / NBRC 110442 / TA 4).